A 315-amino-acid polypeptide reads, in one-letter code: Homoserine kinase (315 aa).

An ATP-binding site is contributed by 97-107; the sequence is PPARGLGSSAT.

The protein belongs to the GHMP kinase family. Homoserine kinase subfamily.

The protein localises to the cytoplasm. The enzyme catalyses L-homoserine + ATP = O-phospho-L-homoserine + ADP + H(+). Its pathway is amino-acid biosynthesis; L-threonine biosynthesis; L-threonine from L-aspartate: step 4/5. Functionally, catalyzes the ATP-dependent phosphorylation of L-homoserine to L-homoserine phosphate. The chain is Homoserine kinase from Prochlorococcus marinus subsp. pastoris (strain CCMP1986 / NIES-2087 / MED4).